The chain runs to 190 residues: MTTLEIWLLAISLAMDCFTVSITSGIIMRRICWRTFFIMAFFFGLFQAVMPLIGWFAASRFSHLIEDYDHWIAFGLLAFWGGRMIKESFSNEDKRCFDPTKLKVVVTLAIATSIDALAIGISFAFVGINSFTSILSPIVIIGFTSFVISTLGSLIGVFCGKRFNLRMELWGGLVLIIIGVKILIEHLFLS.

A run of 6 helical transmembrane segments spans residues 6-26 (IWLL…TSGI), 36-56 (FFIM…IGWF), 61-81 (FSHL…AFWG), 108-128 (LAIA…FVGI), 138-158 (IVII…IGVF), and 169-189 (LWGG…HLFL).

It belongs to the MntP (TC 9.B.29) family.

The protein localises to the cell inner membrane. Its function is as follows. Probably functions as a manganese efflux pump. The polypeptide is Putative manganese efflux pump MntP (Phocaeicola vulgatus (strain ATCC 8482 / DSM 1447 / JCM 5826 / CCUG 4940 / NBRC 14291 / NCTC 11154) (Bacteroides vulgatus)).